The sequence spans 313 residues: Probable 5-dehydro-4-deoxyglucarate dehydratase (313 aa).

The protein belongs to the DapA family.

The catalysed reaction is 5-dehydro-4-deoxy-D-glucarate + H(+) = 2,5-dioxopentanoate + CO2 + H2O. It functions in the pathway carbohydrate acid metabolism; D-glucarate degradation; 2,5-dioxopentanoate from D-glucarate: step 2/2. This Bradyrhizobium sp. (strain BTAi1 / ATCC BAA-1182) protein is Probable 5-dehydro-4-deoxyglucarate dehydratase.